Reading from the N-terminus, the 328-residue chain is MRPVRLMKVFVTRRIPAEGRVALARAADCEVEQWDSDEPIPAKELERGVAGAHGLLCLLSDHVDKRILDAAGANLKVISTMSVGIDHLALDEIKKRGIRVGYTPDVLTDTTAELAVSLLLTTCRRLPEAIEEVKNGGWTSWKPLWLCGYGLTQSTVGIIGLGRIGQAIARRLKPFGVQRFLYTGRQPRPEEAAEFQAEFVSTPELAAQSDFIVVACSLTPATEGLCNKDFFQKMKETAVFINISRGDVVNQDDLYQALASGKIAAAGLDVTSPEPLPTNHPLLTLKNCVILPHIGSATHRTRNTMSLLAANNLLAGLRGEPMPSELKL.

At serine 36 the chain carries Phosphoserine. 83–84 is a binding site for substrate; it reads VG. Residues 162–164, 185–188, serine 217, and isoleucine 243 contribute to the NADP(+) site; these read GRI and RQPR. Residues arginine 245 and aspartate 269 each contribute to the substrate site. Serine 272 carries the phosphoserine modification. Residue histidine 293 is the Proton donor of the active site. Substrate is bound at residue 293 to 296; the sequence is HIGS. Glycine 295 provides a ligand contact to NADP(+). Threonine 298 is subject to Phosphothreonine.

The protein belongs to the D-isomer specific 2-hydroxyacid dehydrogenase family. Homodimer. As to expression, ubiquitous. Most abundantly expressed in the liver.

The catalysed reaction is glycolate + NADP(+) = glyoxylate + NADPH + H(+). It carries out the reaction (R)-glycerate + NAD(+) = 3-hydroxypyruvate + NADH + H(+). It catalyses the reaction (R)-glycerate + NADP(+) = 3-hydroxypyruvate + NADPH + H(+). Functionally, enzyme with hydroxy-pyruvate reductase, glyoxylate reductase and D-glycerate dehydrogenase enzymatic activities. Reduces hydroxypyruvate to D-glycerate, glyoxylate to glycolate, oxidizes D-glycerate to hydroxypyruvate. The protein is Glyoxylate reductase/hydroxypyruvate reductase (GRHPR) of Homo sapiens (Human).